The following is a 322-amino-acid chain: Transaldolase (322 aa).

The Schiff-base intermediate with substrate role is filled by Lys-132.

Belongs to the transaldolase family. Type 1 subfamily. In terms of assembly, homodimer.

It localises to the cytoplasm. It catalyses the reaction D-sedoheptulose 7-phosphate + D-glyceraldehyde 3-phosphate = D-erythrose 4-phosphate + beta-D-fructose 6-phosphate. Its pathway is carbohydrate degradation; pentose phosphate pathway; D-glyceraldehyde 3-phosphate and beta-D-fructose 6-phosphate from D-ribose 5-phosphate and D-xylulose 5-phosphate (non-oxidative stage): step 2/3. Its function is as follows. Transaldolase is important for the balance of metabolites in the pentose-phosphate pathway. This chain is Transaldolase, found in Protochlamydia amoebophila (strain UWE25).